A 184-amino-acid chain; its full sequence is Protein Iojap-related, mitochondrial (184 aa).

A mitochondrion-targeting transit peptide spans 1–39 (MLTTLRSRCSSLLLNQSWKLAPNRIFASSPSFSSSAGIS).

It belongs to the Iojap/RsfS family.

It is found in the mitochondrion. In terms of biological role, may be a ribosome silencing factor involved in organelle biogenesis and required for germination. In Arabidopsis thaliana (Mouse-ear cress), this protein is Protein Iojap-related, mitochondrial.